The sequence spans 100 residues: Urease subunit gamma (100 aa).

Belongs to the urease gamma subunit family. Probable heterotrimer of UreA (gamma), UreB (beta) and UreC (alpha) subunits. Three heterotrimers associate to form the active enzyme. The trimeric urease interacts with an accessory complex composed of UreD, UreF and UreG, which is required for the assembly of the nickel containing metallocenter of UreC. The UreE protein may also play a direct role in nickel transfer to the urease apoprotein.

The protein localises to the cytoplasm. It catalyses the reaction urea + 2 H2O + H(+) = hydrogencarbonate + 2 NH4(+). The protein operates within nitrogen metabolism; urea degradation; CO(2) and NH(3) from urea (urease route): step 1/1. This is Urease subunit gamma from Proteus mirabilis (strain HI4320).